We begin with the raw amino-acid sequence, 151 residues long: Proline-rich acidic protein 1 (151 aa).

An N-terminal signal peptide occupies residues 1-20 (MRRLLLVTSLVVVLLWEAGA). A disordered region spans residues 71–151 (LTTEEKPRGQ…EDQDHIYHPQ (81 aa)).

Interacts with isoform 1 and isoform 3 of MAD1L1. Interacts with MTTP. As to expression, highly expressed in the intestinal epithelial cells (at protein level). Abundantly expressed in the epithelial cells of the liver, kidney and cervix. Significantly down-regulated in hepatocellular carcinoma and right colon adenocarcinoma compared with the respective adjacent normal tissues. Expressed in epididymis (at protein level).

It is found in the secreted. The protein resides in the endoplasmic reticulum. Its function is as follows. Lipid-binding protein which promotes lipid absorption by facilitating MTTP-mediated lipid transfer (mainly triglycerides and phospholipids) and MTTP-mediated apoB lipoprotein assembly and secretion. Protects the gastrointestinal epithelium from irradiation-induced apoptosis. May play an important role in maintaining normal growth homeostasis in epithelial cells. Involved in p53/TP53-dependent cell survival after DNA damage. May down-regulate the expression of MAD1L1 and exert a suppressive role in mitotic spindle assembly checkpoint in hepatocellular carcinomas. This chain is Proline-rich acidic protein 1 (PRAP1), found in Homo sapiens (Human).